A 397-amino-acid polypeptide reads, in one-letter code: F-box protein At4g11590 (397 aa).

The 47-residue stretch at 24-70 folds into the F-box domain; it reads EKNFNDVPLDVAIEIFMRLPVKSVARFLLLSKFWAEIIRSRHFITSF.

Part of a SCF (ASK-cullin-F-box) protein ligase complex. Interacts with ASK16.

Its subcellular location is the nucleus. Its pathway is protein modification; protein ubiquitination. Functionally, component of SCF(ASK-cullin-F-box) E3 ubiquitin ligase complexes, which may mediate the ubiquitination and subsequent proteasomal degradation of target proteins. This is F-box protein At4g11590 from Arabidopsis thaliana (Mouse-ear cress).